The following is a 389-amino-acid chain: Radial spoke head protein 3 homolog B (389 aa).

The tract at residues 63–106 (PTGQVPGQPDPLELQRQQQARRRALARKRAQEQLKPRTPEPVEG) is disordered. Residues 81 to 90 (QARRRALARK) show a composition bias toward basic residues. A compositionally biased stretch (basic and acidic residues) spans 91–106 (RAQEQLKPRTPEPVEG). T143 carries the phosphothreonine; by MAPK1 modification. Residues 206-242 (YEEIRNVELAEVQRLEEQERRHREEKERRKKQQWEIV) are a coiled coil. The tract at residues 332-389 (EAMPPGQKTNVINGPNTVTDPSVTTLHTQKPVLDRVSSQPAPSQERKPVEEGGHLMAE) is disordered. Residues 338 to 359 (QKTNVINGPNTVTDPSVTTLHT) are compositionally biased toward polar residues. Basic and acidic residues predominate over residues 375–389 (QERKPVEEGGHLMAE).

Belongs to the flagellar radial spoke RSP3 family. In terms of assembly, component of the axonemal radial spoke 1 (RS1) and 2 (RS2) complexes, at least composed of spoke head proteins RSPH1, RSPH3B, RSPH9 and the cilia-specific component RSPH4A or sperm-specific component RSPH6A, spoke stalk proteins RSPH14, DNAJB13, DYDC1, ROPN1L and NME5, and the RS1 complex-specific anchor protein IQUB. Interacts with IQUB. Interacts with phosphorylated MAPK1. Interacts with MEK1. Interacts with PKA regulatory subunits PRKAR1A and PRKAR1B. Interacts with RSPH1. Interacts with RSPH4A. Interacts with RSPH6A. Interacts with RSPH9. Interacts with LRRC23. Expressed in ependymal cells (at protein level).

The protein localises to the cytoplasm. Its subcellular location is the cytoskeleton. It is found in the cilium axoneme. It localises to the flagellum axoneme. Functionally, functions as part of axonemal radial spoke complexes that play an important part in the motility of sperm and cilia. Functions as a protein kinase A-anchoring protein that scaffolds the cAMP-dependent protein kinase holoenzyme. May serve as a point of convergence for MAPK and PKA signaling in cilia. The chain is Radial spoke head protein 3 homolog B (Rsph3b) from Mus musculus (Mouse).